A 223-amino-acid chain; its full sequence is Ribonuclease T (223 aa).

One can recognise an Exonuclease domain in the interval 20 to 194 (VVIDVETAGF…YDTERTAELF (175 aa)). Mg(2+)-binding residues include Asp-23, Glu-25, His-181, and Asp-186. His-181 (proton donor/acceptor) is an active-site residue.

The protein belongs to the RNase T family. As to quaternary structure, homodimer. Requires Mg(2+) as cofactor.

Trims short 3' overhangs of a variety of RNA species, leaving a one or two nucleotide 3' overhang. Responsible for the end-turnover of tRNA: specifically removes the terminal AMP residue from uncharged tRNA (tRNA-C-C-A). Also appears to be involved in tRNA biosynthesis. This chain is Ribonuclease T, found in Shewanella baltica (strain OS155 / ATCC BAA-1091).